The following is a 587-amino-acid chain: Trans-activating transcriptional regulatory protein (587 aa).

This sequence belongs to the nucleopolyhedrovirus IE-1 protein family.

In terms of biological role, regulatory transcriptional protein, which trans-activates gene expression from early baculovirus promoters. Can also trans-activate its own promoter, suggesting that it is autoregulated during normal infection of insect cells. This is Trans-activating transcriptional regulatory protein (IE1) from Bombyx mori nuclear polyhedrosis virus (BmNPV).